The sequence spans 109 residues: uncharacterized protein (109 aa).

This sequence to A.fulgidus AF1885.

This is an uncharacterized protein from Methanocaldococcus jannaschii (strain ATCC 43067 / DSM 2661 / JAL-1 / JCM 10045 / NBRC 100440) (Methanococcus jannaschii).